A 163-amino-acid polypeptide reads, in one-letter code: MFVDDVTRAFESGDFARPNLFQVEISYLGQNFTFQCKATALPAGIVEKIPVGFMNRKINVAGDRTFDDWTVTVMNDEAHDARQKFVDWQSIAAGQGNEITGGKPAEYKKSAIVRQYARDAKTVTKEIEIKGLWPTNVGELQLDWDSNNEIQTFEVTLALDYWE.

The protein belongs to the T4-like viruses Gp19 protein family. As to quaternary structure, homohexamer. The tube is composed of gp19 hexameric rings. Interacts with gp54.

It localises to the virion. Functionally, forms the central cylindrical rigid tube, which is surrounded by the outer contractile sheath assembled from gp18 subunits. The tail tube first 2 annuli are formed by gp48 and gp54, which are in continuation of the spike complex. During infection, contraction of the sheath drives the central tube through the host outer membrane, creating a channel for DNA ejection from the capsid into the host cell. In Escherichia coli (Bacteriophage T4), this protein is Tail tube protein gp19 (19).